Here is a 104-residue protein sequence, read N- to C-terminus: Ubiquitin-related modifier 1 homolog (104 aa).

Gly-104 is modified (1-thioglycine). Residue Gly-104 forms a Glycyl lysine isopeptide (Gly-Lys) (interchain with K-? in acceptor proteins) linkage.

This sequence belongs to the URM1 family. As to quaternary structure, interacts with cer. In terms of processing, C-terminal thiocarboxylation occurs in 2 steps, it is first acyl-adenylated (-COAMP) via the hesA/moeB/thiF part of the MOCS3 homolog, then thiocarboxylated (-COSH) via the rhodanese domain of the MOCS3 homolog.

It is found in the cytoplasm. Its pathway is tRNA modification; 5-methoxycarbonylmethyl-2-thiouridine-tRNA biosynthesis. Functionally, acts as a sulfur carrier required for 2-thiolation of mcm(5)S(2)U at tRNA wobble positions of cytosolic tRNA(Lys), tRNA(Glu) and tRNA(Gln). Serves as sulfur donor in tRNA 2-thiolation reaction by being thiocarboxylated (-COSH) at its C-terminus by MOCS3. The sulfur is then transferred to tRNA to form 2-thiolation of mcm(5)S(2)U. Also acts as a ubiquitin-like protein (UBL) that is covalently conjugated via an isopeptide bond to lysine residues of target proteins such as Prx2/Jafrac1, Ciao1, Eip71CD and GILT1. The thiocarboxylated form serves as substrate for conjugation and oxidative stress specifically induces the formation of UBL-protein conjugates. The sequence is that of Ubiquitin-related modifier 1 homolog from Drosophila grimshawi (Hawaiian fruit fly).